The sequence spans 661 residues: Heme transporter BhuA (661 aa).

A signal peptide spans 1-23; sequence MKFTRTLVLVSTSLLATVATSQA. The region spanning 48 to 159 is the TBDR plug domain; sequence KDNIEATGGT…AAGAIRYETV (112 aa). Positions 170-661 constitute a TBDR beta-barrel domain; sequence TFGARIIGSY…TFTFQTAFKF (492 aa).

Belongs to the TonB-dependent receptor family.

The protein localises to the cell outer membrane. Functionally, heme transporter playing an important role in stationary-phase iron acquisition and required for maintenance of chronic infection in mice. This is Heme transporter BhuA (bhuA) from Brucella abortus (strain 2308).